Here is a 175-residue protein sequence, read N- to C-terminus: NADH-quinone oxidoreductase subunit B (175 aa).

Residues Cys-54, Cys-55, Cys-119, and Cys-149 each contribute to the [4Fe-4S] cluster site.

Belongs to the complex I 20 kDa subunit family. In terms of assembly, NDH-1 is composed of at least 14 different subunits, Nqo1 to Nqo14. The complex has a L-shaped structure, with the hydrophobic arm (subunits Nqo7, Nqo8, Nqo10 to Nqo14) embedded in the inner membrane and the hydrophilic peripheral arm (subunits Nqo1 to Nqo6, Nqo9) protruding into the bacterial cytoplasm. The hydrophilic domain contains all the redox centers. NADH-quinone oxidoreductase forms a supercomplex with ubiquinol-cytochrome c reductase complex (complex III or cytochrome b-c1 complex) and cytochrome c oxidase (complex IV), which stabilizes the NADH-quinone oxidoreductase complex. [4Fe-4S] cluster serves as cofactor.

The protein localises to the cell inner membrane. It catalyses the reaction a quinone + NADH + 5 H(+)(in) = a quinol + NAD(+) + 4 H(+)(out). NDH-1 shuttles electrons from NADH, via FMN and iron-sulfur (Fe-S) centers, to quinones in the respiratory chain. The immediate electron acceptor for the enzyme in this species is believed to be ubiquinone. Couples the redox reaction to proton translocation (for every two electrons transferred, four hydrogen ions are translocated across the cytoplasmic membrane), and thus conserves the redox energy in a proton gradient. This is NADH-quinone oxidoreductase subunit B from Paracoccus denitrificans (strain Pd 1222).